The following is a 275-amino-acid chain: Galaxin-2 (275 aa).

An N-terminal signal peptide occupies residues 1-20 (MTRFTSIGLCAVLLFNVCSC).

In terms of tissue distribution, component of the acid-insoluble and acid-soluble organic matrix of the aragonitic skeleton (at protein level).

Its subcellular location is the secreted. This Acropora millepora (Staghorn coral) protein is Galaxin-2.